The primary structure comprises 67 residues: Large ribosomal subunit protein uL29 (67 aa).

This sequence belongs to the universal ribosomal protein uL29 family.

The polypeptide is Large ribosomal subunit protein uL29 (Rubrobacter xylanophilus (strain DSM 9941 / JCM 11954 / NBRC 16129 / PRD-1)).